A 66-amino-acid chain; its full sequence is Type 3 secretion system chaperone YscE (66 aa).

The protein belongs to the YscE family. As to quaternary structure, component of the heterodimeric YscE-YscG chaperone. The YscE-YscG chaperone forms a stable ternary complex with YscF/SctF.

The protein resides in the cytoplasm. Functionally, chaperone of the type III secretion system (T3SS), also called injectisome, which is used to inject bacterial effector proteins into eukaryotic host cells. Along with YscG, prevents premature polymerization of the YscF/SctF needle protein within the cytoplasm. Required for Yop secretion. The chain is Type 3 secretion system chaperone YscE from Yersinia enterocolitica.